A 31-amino-acid polypeptide reads, in one-letter code: Ranatuerin-2PL (31 aa).

A disulfide bridge connects residues Cys23 and Cys29.

Expressed by the skin glands.

It localises to the secreted. Its function is as follows. Antimicrobial activity against Gram-negative bacterium E.coli. This is Ranatuerin-2PL from Lithobates palustris (Pickerel frog).